Reading from the N-terminus, the 148-residue chain is MKVLLIKDVKSLGKAGEIKEVADGYGKNFLIGKGLALHATTDVLNKHKAEQKKLALKEEQEIAQAKELAEKLNATKLTIKHKVGANGHLIGSVTNKEVSDALEQQFSIMIDKKNIALDNKIKTIGIYEVDCKLGHSIHAKLKIDVIAE.

It belongs to the bacterial ribosomal protein bL9 family.

Binds to the 23S rRNA. This chain is Large ribosomal subunit protein bL9, found in Aliarcobacter butzleri (strain RM4018) (Arcobacter butzleri).